Reading from the N-terminus, the 197-residue chain is TLE family member 5 (197 aa).

Positions 166–197 (LSALGSQTHLSKEDKNGHDGDTHQEDDGEKSD) are CCN domain. Positions 170-197 (GSQTHLSKEDKNGHDGDTHQEDDGEKSD) are disordered. Over residues 175–197 (LSKEDKNGHDGDTHQEDDGEKSD) the composition is skewed to basic and acidic residues. S196 is subject to Phosphoserine.

This sequence belongs to the WD repeat Groucho/TLE family. Homooligomer and heterooligomer with other family members. Binds TCF7 and the NF-kappa-B subunit RELA. Interacts with PHF12. Interacts (via Q domain) with SIX3. Interacts with SIX6. Ubiquitinated by XIAP/BIRC4. In terms of tissue distribution, ubiquitously expressed in developing embryos by midgestation, a wide expression is conserved in adult. In mouse, abundantly expressed in muscle, heart and brain.

It is found in the nucleus. Transcriptional corepressor. Acts as a dominant repressor towards other family members. Inhibits NF-kappa-B-regulated gene expression. May be required for the initiation and maintenance of the differentiated state. Essential for the transcriptional repressor activity of SIX3 during retina and lens development. This chain is TLE family member 5, found in Mus musculus (Mouse).